A 284-amino-acid chain; its full sequence is Shikimate dehydrogenase (NADP(+)) (284 aa).

Residues 20–22 and Ser67 contribute to the shikimate site; that span reads SIS. Catalysis depends on Lys71, which acts as the Proton acceptor. Asp83 contributes to the NADP(+) binding site. Residues Asn92 and Asp107 each coordinate shikimate. NADP(+) contacts are provided by residues 129 to 133 and Ile227; that span reads GAGGA. Tyr229 contributes to the shikimate binding site. Gly250 contacts NADP(+).

It belongs to the shikimate dehydrogenase family. As to quaternary structure, homodimer.

The catalysed reaction is shikimate + NADP(+) = 3-dehydroshikimate + NADPH + H(+). Its pathway is metabolic intermediate biosynthesis; chorismate biosynthesis; chorismate from D-erythrose 4-phosphate and phosphoenolpyruvate: step 4/7. In terms of biological role, involved in the biosynthesis of the chorismate, which leads to the biosynthesis of aromatic amino acids. Catalyzes the reversible NADPH linked reduction of 3-dehydroshikimate (DHSA) to yield shikimate (SA). The sequence is that of Shikimate dehydrogenase (NADP(+)) from Streptococcus pneumoniae (strain 70585).